A 420-amino-acid polypeptide reads, in one-letter code: rRNA methyltransferase 3, mitochondrial (420 aa).

A mitochondrion-targeting transit peptide spans methionine 1–valine 40. Residues glutamate 49 to glutamate 88 form a disordered region. Basic and acidic residues predominate over residues glutamate 69–alanine 80. Glycine 356, isoleucine 380, and leucine 389 together coordinate S-adenosyl-L-methionine.

Belongs to the class IV-like SAM-binding methyltransferase superfamily. RNA methyltransferase TrmH family. In terms of tissue distribution, expressed at same level in normal liver and hepatocarcinoma.

The protein resides in the mitochondrion. The catalysed reaction is guanosine(1370) in 16S rRNA + S-adenosyl-L-methionine = 2'-O-methylguanosine(1370) in 16S rRNA + S-adenosyl-L-homocysteine + H(+). In terms of biological role, S-adenosyl-L-methionine-dependent 2'-O-ribose methyltransferase that catalyzes the formation of 2'-O-methylguanosine at position 1370 (Gm1370) in the 16S mitochondrial large subunit ribosomal RNA (mtLSU rRNA), a conserved modification in the peptidyl transferase domain of the mtLSU rRNA. Also required for formation of 2'-O-methyluridine at position 1369 (Um1369) mediated by MRM2. The polypeptide is rRNA methyltransferase 3, mitochondrial (Homo sapiens (Human)).